The sequence spans 256 residues: Metallo-beta-lactamase type 2 (256 aa).

The N-terminal stretch at 1-29 (MKNTLLKLGVCVSLLGITPFVSTISSVQA) is a signal peptide. Residues His-115, His-117, Asp-119, His-178, and Cys-197 each coordinate Zn(2+). Substrate contacts are provided by Lys-200 and Asn-209. His-239 serves as a coordination point for Zn(2+).

Belongs to the metallo-beta-lactamase superfamily. Class-B beta-lactamase family. In terms of assembly, monomer. Requires Zn(2+) as cofactor.

The protein resides in the periplasm. The enzyme catalyses a beta-lactam + H2O = a substituted beta-amino acid. Inhibited by chelating agents such as EDTA. Confers resistance to the different beta-lactams antibiotics (penicillin, cephalosporin and carbapenem) via the hydrolysis of the beta-lactam ring. Benzylpenicillin is a better substrate than cephalosporin C and ampicillin. The protein is Metallo-beta-lactamase type 2 of Bacillus cereus.